The primary structure comprises 402 residues: Propionate kinase (402 aa).

Residues Asn11 and Lys18 each coordinate ATP. Mg(2+) is bound at residue Asn11. Arg86 provides a ligand contact to substrate. The active-site Proton donor/acceptor is the Asp143. ATP is bound by residues His175, 203–207 (HLGNG), 278–280 (DLR), and 326–330 (GIGEN).

It belongs to the acetokinase family. TdcD subfamily. Homodimer. Mg(2+) is required as a cofactor.

It catalyses the reaction propanoate + ATP = propanoyl phosphate + ADP. The protein operates within amino-acid degradation; L-threonine degradation via propanoate pathway; propanoate from L-threonine: step 4/4. Its function is as follows. Catalyzes the conversion of propionyl phosphate and ADP to propionate and ATP. The chain is Propionate kinase from Escherichia coli O6:H1 (strain CFT073 / ATCC 700928 / UPEC).